A 542-amino-acid polypeptide reads, in one-letter code: Chaperonin GroEL (542 aa).

ATP-binding positions include 29 to 32 (TLGP), 86 to 90 (DGTTT), Gly-414, and Asp-491.

This sequence belongs to the chaperonin (HSP60) family. In terms of assembly, forms a cylinder of 14 subunits composed of two heptameric rings stacked back-to-back. Interacts with the co-chaperonin GroES.

Its subcellular location is the cytoplasm. The catalysed reaction is ATP + H2O + a folded polypeptide = ADP + phosphate + an unfolded polypeptide.. Functionally, together with its co-chaperonin GroES, plays an essential role in assisting protein folding. The GroEL-GroES system forms a nano-cage that allows encapsulation of the non-native substrate proteins and provides a physical environment optimized to promote and accelerate protein folding. This Desulforamulus reducens (strain ATCC BAA-1160 / DSM 100696 / MI-1) (Desulfotomaculum reducens) protein is Chaperonin GroEL.